We begin with the raw amino-acid sequence, 205 residues long: Guanylate kinase (205 aa).

The region spanning 18–196 (PKLFTISAPA…AYQVLRSIFI (179 aa)) is the Guanylate kinase-like domain. Position 25–32 (25–32 (APAGAGKT)) interacts with ATP.

The protein belongs to the guanylate kinase family.

The protein localises to the cytoplasm. The catalysed reaction is GMP + ATP = GDP + ADP. In terms of biological role, essential for recycling GMP and indirectly, cGMP. This Chlamydia muridarum (strain MoPn / Nigg) protein is Guanylate kinase (gmk).